The sequence spans 156 residues: Large ribosomal subunit protein uL23 (156 aa).

Over residues 1–19 (MAPKAKKEAPAPPKAEAKA) the composition is skewed to basic and acidic residues. Residues 1–67 (MAPKAKKEAP…PKYPRKSAPR (67 aa)) are disordered. A2 bears the N,N,N-trimethylalanine mark. Residue K14 forms a Glycyl lysine isopeptide (Lys-Gly) (interchain with G-Cter in SUMO2) linkage. Basic residues predominate over residues 20 to 67 (KALKAKKAVLKGVHSHKKKKIRTSPTFRRPKTLRLRRQPKYPRKSAPR). Positions 32-74 (VHSHKKKKIRTSPTFRRPKTLRLRRQPKYPRKSAPRRNKLDHY) are beta-like import receptor binding (BIB) domain. A Citrulline modification is found at R41. At S43 the chain carries Phosphoserine. Position 45 is a phosphothreonine (T45). Residue K70 is modified to N6-acetyllysine.

The protein belongs to the universal ribosomal protein uL23 family. As to quaternary structure, component of the large ribosomal subunit. Interacts with LYAR and GNL2. Interacts with MDM2; this interaction may promote MDM2-mediated p53/TP53 polyubiquitination. Directly interacts (via BIB domain) with IPO5, IPO7, KPNB1 and TNPO1; these interactions are involved in RPL23A nuclear import for the assembly of ribosomal subunits. Interacts with IPO8. In terms of processing, N-terminus is methylated by METTL11A/NTM1. Citrullinated by PADI4.

It localises to the cytoplasm. It is found in the nucleus. Functionally, component of the large ribosomal subunit. The ribosome is a large ribonucleoprotein complex responsible for the synthesis of proteins in the cell. Binds a specific region on the 26S rRNA. May promote p53/TP53 degradation possibly through the stimulation of MDM2-mediated TP53 polyubiquitination. In Bos taurus (Bovine), this protein is Large ribosomal subunit protein uL23 (RPL23A).